A 165-amino-acid chain; its full sequence is UPF0303 protein BMA1246 (165 aa).

Belongs to the UPF0303 family.

This chain is UPF0303 protein BMA1246, found in Burkholderia mallei (strain ATCC 23344).